Consider the following 190-residue polypeptide: Cytidylate kinase (190 aa).

ATP is bound at residue 7–15; sequence GKIGSGKST.

Belongs to the cytidylate kinase family. Type 2 subfamily.

The protein localises to the cytoplasm. It carries out the reaction CMP + ATP = CDP + ADP. It catalyses the reaction dCMP + ATP = dCDP + ADP. In Thermoplasma volcanium (strain ATCC 51530 / DSM 4299 / JCM 9571 / NBRC 15438 / GSS1), this protein is Cytidylate kinase.